Consider the following 148-residue polypeptide: Cytochrome c-type biogenesis protein CcmE (148 aa).

The Cytoplasmic portion of the chain corresponds to 1-7; the sequence is MKPRSKR. The helical; Signal-anchor for type II membrane protein transmembrane segment at 8–28 threads the bilayer; the sequence is LLLVAGAVALLVGAVALVLNA. The Periplasmic segment spans residues 29–148; the sequence is FQQNLVFFHT…AQKAAQTVQQ (120 aa). His-123 and Tyr-127 together coordinate heme.

This sequence belongs to the CcmE/CycJ family.

The protein resides in the cell inner membrane. Its function is as follows. Heme chaperone required for the biogenesis of c-type cytochromes. Transiently binds heme delivered by CcmC and transfers the heme to apo-cytochromes in a process facilitated by CcmF and CcmH. This Aromatoleum aromaticum (strain DSM 19018 / LMG 30748 / EbN1) (Azoarcus sp. (strain EbN1)) protein is Cytochrome c-type biogenesis protein CcmE.